Consider the following 88-residue polypeptide: Small ribosomal subunit protein bS16 (88 aa).

This sequence belongs to the bacterial ribosomal protein bS16 family.

The chain is Small ribosomal subunit protein bS16 from Desulfitobacterium hafniense (strain DSM 10664 / DCB-2).